A 327-amino-acid polypeptide reads, in one-letter code: MNKLISWKPRASIHNLFIRAKIINNIRIFFINRGLLEVETPVMSHTTVPDIYLFPFQTNLYFLEKVPEKGVPMYLITSPEYHMKRLLAAGSGPIFQICHSFRNQEYGNYHNPEFTLLEWYRPYYNMVDIMDEVNIFLQTIIHCDSAEMLSYQQVFRLHVGIDPLLAELDELNQVLVKFNLSSTISLYNDRDKLLDFLFLMLVRPHLGNNKPVFIYNFPASQSLLAELNSDDHRVAERFEVYFHGIELANGSRELTDADLQRERFMQENNKQVAMNRPPRLIDEQLLAALECGLPSCSGVALGIDRLLMLTLKAKHISEVMAFSVTDA.

A substrate-binding site is contributed by 78–80 (SPE). Residues 102–104 (RNQ) and asparagine 111 each bind ATP. Tyrosine 120 is a substrate binding site. Residue 246-247 (EL) participates in ATP binding. Glutamate 253 contributes to the substrate binding site. Glycine 302 is a binding site for ATP.

It belongs to the class-II aminoacyl-tRNA synthetase family. EpmA subfamily. Homodimer.

The enzyme catalyses D-beta-lysine + L-lysyl-[protein] + ATP = N(6)-((3R)-3,6-diaminohexanoyl)-L-lysyl-[protein] + AMP + diphosphate + H(+). Functionally, with EpmB is involved in the beta-lysylation step of the post-translational modification of translation elongation factor P (EF-P). Catalyzes the ATP-dependent activation of (R)-beta-lysine produced by EpmB, forming a lysyl-adenylate, from which the beta-lysyl moiety is then transferred to the epsilon-amino group of a conserved specific lysine residue in EF-P. The protein is Elongation factor P--(R)-beta-lysine ligase of Baumannia cicadellinicola subsp. Homalodisca coagulata.